We begin with the raw amino-acid sequence, 486 residues long: Glutamyl-tRNA(Gln) amidotransferase subunit A (486 aa).

Residues lysine 78 and serine 153 each act as charge relay system in the active site. The active-site Acyl-ester intermediate is serine 177.

The protein belongs to the amidase family. GatA subfamily. As to quaternary structure, heterotrimer of A, B and C subunits.

It catalyses the reaction L-glutamyl-tRNA(Gln) + L-glutamine + ATP + H2O = L-glutaminyl-tRNA(Gln) + L-glutamate + ADP + phosphate + H(+). Functionally, allows the formation of correctly charged Gln-tRNA(Gln) through the transamidation of misacylated Glu-tRNA(Gln) in organisms which lack glutaminyl-tRNA synthetase. The reaction takes place in the presence of glutamine and ATP through an activated gamma-phospho-Glu-tRNA(Gln). This chain is Glutamyl-tRNA(Gln) amidotransferase subunit A, found in Ruminiclostridium cellulolyticum (strain ATCC 35319 / DSM 5812 / JCM 6584 / H10) (Clostridium cellulolyticum).